The sequence spans 406 residues: Glutamyl-tRNA(Gln) amidotransferase subunit D (406 aa).

The Asparaginase/glutaminase domain occupies 68–390 (KSISILATGG…EEFINVFNRN (323 aa)). Residues Thr-78, Thr-152, Asp-153, and Lys-230 contribute to the active site.

Belongs to the asparaginase 1 family. GatD subfamily. Heterodimer of GatD and GatE.

It catalyses the reaction L-glutamyl-tRNA(Gln) + L-glutamine + ATP + H2O = L-glutaminyl-tRNA(Gln) + L-glutamate + ADP + phosphate + H(+). Functionally, allows the formation of correctly charged Gln-tRNA(Gln) through the transamidation of misacylated Glu-tRNA(Gln) in organisms which lack glutaminyl-tRNA synthetase. The reaction takes place in the presence of glutamine and ATP through an activated gamma-phospho-Glu-tRNA(Gln). The GatDE system is specific for glutamate and does not act on aspartate. This Thermoplasma volcanium (strain ATCC 51530 / DSM 4299 / JCM 9571 / NBRC 15438 / GSS1) protein is Glutamyl-tRNA(Gln) amidotransferase subunit D.